The following is a 147-amino-acid chain: Small ribosomal subunit protein bS6 (147 aa).

The segment covering 97-141 has biased composition (basic and acidic residues); it reads EEGPSAMMRKADRDRERDDRGGGFRGDREGGFRGDRGPRRPREEA. Residues 97 to 147 form a disordered region; that stretch reads EEGPSAMMRKADRDRERDDRGGGFRGDREGGFRGDRGPRRPREEAPAVVEE.

It belongs to the bacterial ribosomal protein bS6 family.

In terms of biological role, binds together with bS18 to 16S ribosomal RNA. In Nitrobacter hamburgensis (strain DSM 10229 / NCIMB 13809 / X14), this protein is Small ribosomal subunit protein bS6.